The following is a 320-amino-acid chain: Large ribosomal subunit protein uL10y (320 aa).

Residues 289 to 320 (AGGGAPAAAKVEEKEESDEEDYGGDFGLFDEE) form a disordered region. Over residues 302 to 320 (KEESDEEDYGGDFGLFDEE) the composition is skewed to acidic residues. Phosphoserine is present on serine 305. A Phosphotyrosine modification is found at tyrosine 310.

This sequence belongs to the universal ribosomal protein uL10 family. As to quaternary structure, P0 forms a pentameric complex by interaction with dimers of P1 and P2.

In terms of biological role, ribosomal protein P0 is the functional equivalent of E.coli protein L10. This Arabidopsis thaliana (Mouse-ear cress) protein is Large ribosomal subunit protein uL10y (RPP0B).